Here is a 339-residue protein sequence, read N- to C-terminus: Phenylalanine--tRNA ligase alpha subunit (339 aa).

Residue E254 coordinates Mg(2+).

It belongs to the class-II aminoacyl-tRNA synthetase family. Phe-tRNA synthetase alpha subunit type 1 subfamily. Tetramer of two alpha and two beta subunits. Requires Mg(2+) as cofactor.

Its subcellular location is the cytoplasm. The enzyme catalyses tRNA(Phe) + L-phenylalanine + ATP = L-phenylalanyl-tRNA(Phe) + AMP + diphosphate + H(+). This Clostridium kluyveri (strain ATCC 8527 / DSM 555 / NBRC 12016 / NCIMB 10680 / K1) protein is Phenylalanine--tRNA ligase alpha subunit.